Consider the following 222-residue polypeptide: MREQIKQDIDLIEILFYLKKKIRVILFIMAICMAMVLLFLYINKDNIKVIYSLKINQTTPGILVSCDSNNNFACQTTMTEDVIQRITTFFHTSPDVKNREIRLEWSGDKRALPTAEEEISRVQASIIKWYASEYHNGRQVLDEIQTPSAINSELYTKMIYLTRNWSLYPNGDGCVTISSPEIKNKYPAAICLALGFFLSIVISVMFCLVKKMVDEYQQNSGQ.

2 helical membrane-spanning segments follow: residues 22–42 and 189–209; these read IRVILFIMAICMAMVLLFLYI and AICLALGFFLSIVISVMFCLV.

The protein resides in the cell membrane. This is an uncharacterized protein from Escherichia coli (strain K12).